We begin with the raw amino-acid sequence, 145 residues long: Chaperonin GroEL (145 aa).

This sequence belongs to the chaperonin (HSP60) family. As to quaternary structure, forms a cylinder of 14 subunits composed of two heptameric rings stacked back-to-back. Interacts with the co-chaperonin GroES.

It localises to the cytoplasm. It catalyses the reaction ATP + H2O + a folded polypeptide = ADP + phosphate + an unfolded polypeptide.. Together with its co-chaperonin GroES, plays an essential role in assisting protein folding. The GroEL-GroES system forms a nano-cage that allows encapsulation of the non-native substrate proteins and provides a physical environment optimized to promote and accelerate protein folding. The sequence is that of Chaperonin GroEL from Thermus thermophilus.